The chain runs to 313 residues: MKNYQFSTALLSSQIQGKKLRFPCPAKINLFLYITSQRSDGYHELQTLFQFLNFGDWLSIEIRTDGKIILTPEIPHLKNEDNLIYRAAKLLQQKTGCTLGANLHLDKILPIGGGVGGGSSNAATALVALNYLWNTQLSLSTLAEIGLQLGADVPVFVYGKAAFAEGVGEKLTFCQPPQKWFLVLKPETSISTAIIFKDSNLPRNTSKRPLAELLTTKYENDCEKVVLNHYSEVEEALGWLLQYAPARLTGTGACVFAEFANEQAAQSAFLDKPEKYVGFVAQGTNISPLHQMIEYLSQQKQTLCLPNNTNSRG.

Lys-27 is a catalytic residue. 110–120 (PIGGGVGGGSS) serves as a coordination point for ATP. Residue Asp-152 is part of the active site.

The protein belongs to the GHMP kinase family. IspE subfamily.

The enzyme catalyses 4-CDP-2-C-methyl-D-erythritol + ATP = 4-CDP-2-C-methyl-D-erythritol 2-phosphate + ADP + H(+). Its pathway is isoprenoid biosynthesis; isopentenyl diphosphate biosynthesis via DXP pathway; isopentenyl diphosphate from 1-deoxy-D-xylulose 5-phosphate: step 3/6. Catalyzes the phosphorylation of the position 2 hydroxy group of 4-diphosphocytidyl-2C-methyl-D-erythritol. This Histophilus somni (strain 2336) (Haemophilus somnus) protein is 4-diphosphocytidyl-2-C-methyl-D-erythritol kinase.